A 656-amino-acid chain; its full sequence is Translation factor GUF1 homolog, mitochondrial (656 aa).

The N-terminal 29 residues, 1–29 (MLAVRRRGLRVLAVAPLRVRGLATTSTEF), are a transit peptide targeting the mitochondrion. The tr-type G domain maps to 54 to 238 (ERIRNFSIVA…AVVERLPPPV (185 aa)). Residues 63–70 (AHIDHGKS), 131–135 (DTPGH), and 185–188 (TKID) contribute to the GTP site.

The protein belongs to the TRAFAC class translation factor GTPase superfamily. Classic translation factor GTPase family. LepA subfamily.

The protein resides in the mitochondrion inner membrane. The catalysed reaction is GTP + H2O = GDP + phosphate + H(+). Its function is as follows. Promotes mitochondrial protein synthesis. May act as a fidelity factor of the translation reaction, by catalyzing a one-codon backward translocation of tRNAs on improperly translocated ribosomes. Binds to mitochondrial ribosomes in a GTP-dependent manner. This chain is Translation factor GUF1 homolog, mitochondrial, found in Phytophthora infestans (strain T30-4) (Potato late blight agent).